A 1207-amino-acid chain; its full sequence is Glycerotoxin paralog 1 (1207 aa).

Residues 79-120 (DLNECNRNNGGCTNGKCINTEGSYHCDCDRGYLATSSRTKCE) form the EGF-like domain. 5 cysteine pairs are disulfide-bonded: cysteine 83–cysteine 95, cysteine 90–cysteine 104, cysteine 106–cysteine 119, cysteine 124–cysteine 167, and cysteine 151–cysteine 185. A Sushi domain is found at 122 to 187 (VECEPLTLAN…WSGTSPTCQN (66 aa)). WSC domains are found at residues 300–391 (VGTS…YRDR) and 392–476 (SLGF…NDQG). N-linked (GlcNAc...) asparagine glycosylation occurs at asparagine 745.

In terms of assembly, dimer; probably disulfide-linked. Interacts with Cav2.2/CACNA1B calcium channel. Expressed exclusively in the four pharyngeal lobes and in tissue located at the base of the teeth. No distinct expression is visible in the putative venom glands or elsewhere in the pharynx.

The protein resides in the secreted. Its function is as follows. Potent venom presynaptic neurotoxin that promotes a long-lasting increase in spontaneous neurotransmitter release at the peripheral and central synapses by selective activation of Cav2.2/CACNA1B (N-type) channels. In addition, it drastically enhances synaptic-vesicle recycling, an effect that is prevented by the Cav2.2-specific inhibitor conotoxin-MVIIA. It activates Cav2.2/CACNA1B by shifting the current-voltage relationship of channels towards more hyperpolarized potentiels in a reversible manner. May have two separate sites of action on Cav2.2: one high affinity linked to changes in gating properties, and a second low affinity that results in block of current activity. This chain is Glycerotoxin paralog 1, found in Glycera tridactyla (Glycerine worm).